Reading from the N-terminus, the 525-residue chain is GMP synthase [glutamine-hydrolyzing] (525 aa).

The Glutamine amidotransferase type-1 domain maps to Arg9–Leu207. The active-site Nucleophile is Cys86. Catalysis depends on residues His181 and Glu183. The GMPS ATP-PPase domain maps to Trp208–Arg400. Ser235 to Ser241 is an ATP binding site.

Homodimer.

The catalysed reaction is XMP + L-glutamine + ATP + H2O = GMP + L-glutamate + AMP + diphosphate + 2 H(+). The protein operates within purine metabolism; GMP biosynthesis; GMP from XMP (L-Gln route): step 1/1. Its function is as follows. Catalyzes the synthesis of GMP from XMP. The protein is GMP synthase [glutamine-hydrolyzing] of Colwellia psychrerythraea (strain 34H / ATCC BAA-681) (Vibrio psychroerythus).